The chain runs to 144 residues: Large ribosomal subunit protein uL15 (144 aa).

Residues 1-54 (MRLNTLSPAEGSKKAGKRLGRGIGSGLGKTGGRGHKGQKSRSGGGVRRGFEGGQ) are disordered. Over residues 21 to 31 (RGIGSGLGKTG) the composition is skewed to gly residues.

Belongs to the universal ribosomal protein uL15 family. As to quaternary structure, part of the 50S ribosomal subunit.

Binds to the 23S rRNA. The protein is Large ribosomal subunit protein uL15 of Salmonella arizonae (strain ATCC BAA-731 / CDC346-86 / RSK2980).